Reading from the N-terminus, the 273-residue chain is uncharacterized protein (273 aa).

This sequence belongs to the PhyH family.

This is an uncharacterized protein from Mycobacterium tuberculosis (strain ATCC 25618 / H37Rv).